We begin with the raw amino-acid sequence, 142 residues long: MAKKSIGQLKLQVPAGAATPSPPIGPALGQRGINIMEFCKAFNAATQEMEKGAPIPVIITYYQDKSFTFSLKTPPVSFFLKKEANLKSGSKEPGKVSVGSISRDKIRSIAQAKMKDLNANDIEAAMRMVEGSARSMGLEVVG.

Belongs to the universal ribosomal protein uL11 family. Part of the ribosomal stalk of the 50S ribosomal subunit. Interacts with L10 and the large rRNA to form the base of the stalk. L10 forms an elongated spine to which L12 dimers bind in a sequential fashion forming a multimeric L10(L12)X complex. One or more lysine residues are methylated.

Forms part of the ribosomal stalk which helps the ribosome interact with GTP-bound translation factors. The protein is Large ribosomal subunit protein uL11 of Bartonella henselae (strain ATCC 49882 / DSM 28221 / CCUG 30454 / Houston 1) (Rochalimaea henselae).